A 331-amino-acid polypeptide reads, in one-letter code: GTP 3',8-cyclase (331 aa).

In terms of domain architecture, Radical SAM core spans M1 to A231. R8 contributes to the GTP binding site. Residues C15 and C19 each contribute to the [4Fe-4S] cluster site. Y21 contributes to the S-adenosyl-L-methionine binding site. Position 22 (C22) interacts with [4Fe-4S] cluster. Residue R60 participates in GTP binding. Residue G64 coordinates S-adenosyl-L-methionine. Residue T91 participates in GTP binding. Position 115 (S115) interacts with S-adenosyl-L-methionine. K157 is a GTP binding site. M191 lines the S-adenosyl-L-methionine pocket. [4Fe-4S] cluster is bound by residues C254 and C257. R259 to R261 provides a ligand contact to GTP. C271 is a [4Fe-4S] cluster binding site.

Belongs to the radical SAM superfamily. MoaA family. Monomer and homodimer. It depends on [4Fe-4S] cluster as a cofactor.

The catalysed reaction is GTP + AH2 + S-adenosyl-L-methionine = (8S)-3',8-cyclo-7,8-dihydroguanosine 5'-triphosphate + 5'-deoxyadenosine + L-methionine + A + H(+). It participates in cofactor biosynthesis; molybdopterin biosynthesis. Functionally, catalyzes the cyclization of GTP to (8S)-3',8-cyclo-7,8-dihydroguanosine 5'-triphosphate. The protein is GTP 3',8-cyclase of Acaryochloris marina (strain MBIC 11017).